The sequence spans 443 residues: COP9 signalosome complex subunit 2 (443 aa).

The interval 1 to 275 is mediates interaction with NIF3L1; sequence MSDMEDDFMC…DESGSPRRTT (275 aa). Residues 254-416 form the PCI domain; the sequence is AHTDFFEAFK…QLLELDHQKR (163 aa).

Belongs to the CSN2 family. In terms of assembly, component of the CSN complex, composed of COPS1/GPS1, COPS2, COPS3, COPS4, COPS5, COPS6, COPS7 (COPS7A or COPS7B), COPS8 and COPS9 isoform 1. In the complex, it probably interacts directly with COPS1, COPS4, COPS5, COPS6 and COPS7 (COPS7A or COPS7B). Specifically interacts with the ligand binding domain of the thyroid receptor (TR). Does not require the presence of thyroid hormone for its interaction. Interacts with CUL1 and CUL2. Interacts with IRF8/ICSBP1 and with nuclear receptors NR2F1 and NR0B1. Interacts with NIF3L1. Post-translationally, phosphorylated by CK2 and PKD kinases.

The protein localises to the cytoplasm. Its subcellular location is the nucleus. Essential component of the COP9 signalosome complex (CSN), a complex involved in various cellular and developmental processes. The CSN complex is an essential regulator of the ubiquitin (Ubl) conjugation pathway by mediating the deneddylation of the cullin subunits of SCF-type E3 ligase complexes, leading to decrease the Ubl ligase activity of SCF-type complexes such as SCF, CSA or DDB2. The complex is also involved in phosphorylation of p53/TP53, c-jun/JUN, IkappaBalpha/NFKBIA, ITPK1 and IRF8/ICSBP, possibly via its association with CK2 and PKD kinases. CSN-dependent phosphorylation of TP53 and JUN promotes and protects degradation by the Ubl system, respectively. Involved in early stage of neuronal differentiation via its interaction with NIF3L1. The protein is COP9 signalosome complex subunit 2 (COPS2) of Homo sapiens (Human).